We begin with the raw amino-acid sequence, 220 residues long: Protein-L-isoaspartate O-methyltransferase (220 aa).

The active site involves Ser64.

It belongs to the methyltransferase superfamily. L-isoaspartyl/D-aspartyl protein methyltransferase family.

The protein localises to the cytoplasm. It catalyses the reaction [protein]-L-isoaspartate + S-adenosyl-L-methionine = [protein]-L-isoaspartate alpha-methyl ester + S-adenosyl-L-homocysteine. Catalyzes the methyl esterification of L-isoaspartyl residues in peptides and proteins that result from spontaneous decomposition of normal L-aspartyl and L-asparaginyl residues. It plays a role in the repair and/or degradation of damaged proteins. This chain is Protein-L-isoaspartate O-methyltransferase, found in Methanoculleus marisnigri (strain ATCC 35101 / DSM 1498 / JR1).